Reading from the N-terminus, the 266-residue chain is Probable septum site-determining protein MinC (266 aa).

A disordered region spans residues 98-146; sequence ILKGGRPVSDVDVPKVEPESPPAEEKKKTGKATKASGKSDEIGETDSPQ. Residues 109–124 are compositionally biased toward basic and acidic residues; sequence DVPKVEPESPPAEEKK.

This sequence belongs to the MinC family. In terms of assembly, interacts with MinD and FtsZ.

Its function is as follows. Cell division inhibitor that blocks the formation of polar Z ring septums. Rapidly oscillates between the poles of the cell to destabilize FtsZ filaments that have formed before they mature into polar Z rings. Prevents FtsZ polymerization. The protein is Probable septum site-determining protein MinC of Allorhizobium ampelinum (strain ATCC BAA-846 / DSM 112012 / S4) (Agrobacterium vitis (strain S4)).